The following is a 375-amino-acid chain: Fluoride export protein 1 (375 aa).

At 1–11 (MIFNPVISNHK) the chain is on the cytoplasmic side. A helical transmembrane segment spans residues 12 to 32 (LSHYIHVFCTFTTFCILGTET). Topologically, residues 33-34 (RQ) are extracellular. Residues 35–55 (AITALSTYTPAFVTAPTVLWS) traverse the membrane as a helical segment. Topologically, residues 56–79 (NCSSCMLMGIMQSLNAYTWMKDHQ) are cytoplasmic. Residues 80 to 100 (VLFLGVTTGYCGALSSFSSML) form a helical membrane-spanning segment. The Extracellular portion of the chain corresponds to 101 to 127 (LEMFEHSTNLTNGNIANHTKLPNRAYG). Residues Asn109 and Asn117 are each glycosylated (N-linked (GlcNAc...) asparagine). Residues 128-148 (IMEFLSVLLVHLMVSMGSLIF) form a helical membrane-spanning segment. The Cytoplasmic portion of the chain corresponds to 149-213 (GRQLGKEVIV…FKKFFDIVDK (65 aa)). Residues 214–234 (LAYALAFPLIILFVVLCAYYE) form a helical membrane-spanning segment. Asn235 carries N-linked (GlcNAc...) asparagine glycosylation. Topologically, residues 235-241 (NYSRGKW) are extracellular. Residues 242–262 (TLPCLFGIFAGFLRYWLAEMF) traverse the membrane as a helical segment. At 263–268 (NKTNKK) the chain is on the cytoplasmic side. A helical transmembrane segment spans residues 269-289 (FPLGTFLANVFATLLIGIFTM). Residues 290–310 (VQRGKKHFSTDVPIVNSLNSC) are Extracellular-facing. A helical transmembrane segment spans residues 311 to 331 (HIVSALISGFCGTLSTISTFI). Residues 332 to 338 (NEGYKLS) are Cytoplasmic-facing. Residues 339–359 (FINMLIYYTVSIAISYCLLVI) traverse the membrane as a helical segment. Residues 360–375 (TLGSYAWTRGLTNPIC) lie on the Extracellular side of the membrane.

It belongs to the fluoride channel Fluc/FEX (TC 1.A.43) family.

It localises to the cell membrane. The catalysed reaction is fluoride(in) = fluoride(out). In terms of biological role, fluoride channel required for the rapid expulsion of cytoplasmic fluoride. The protein is Fluoride export protein 1 of Saccharomyces cerevisiae (strain ATCC 204508 / S288c) (Baker's yeast).